The sequence spans 441 residues: Protein C-ets-1 (441 aa).

N6-acetyllysine; alternate is present on residues Lys8 and Lys15. Residues Lys8 and Lys15 each participate in a glycyl lysine isopeptide (Lys-Gly) (interchain with G-Cter in SUMO2); alternate cross-link. The residue at position 38 (Thr38) is a Phosphothreonine; by MAPK. Residues 51 to 136 form the PNT domain; that stretch reads ATFSGFTKEQ…EHLEILQKED (86 aa). An activation domain; required for transcription activation region spans residues 130–243; that stretch reads EILQKEDVKP…DNMCMGRTSR (114 aa). A Glycyl lysine isopeptide (Lys-Gly) (interchain with G-Cter in SUMO2) cross-link involves residue Lys138. The residue at position 223 (Tyr223) is a Phosphotyrosine. Residue Lys227 forms a Glycyl lysine isopeptide (Lys-Gly) (interchain with G-Cter in SUMO) linkage. Ser251 and Ser254 each carry phosphoserine. Thr265 bears the Phosphothreonine mark. A phosphoserine mark is found at Ser267, Ser270, Ser282, and Ser285. Positions 304–312 are helix HI-1; it reads FKDYVRDRA. An N6-acetyllysine modification is found at Lys305. Residues 323 to 330 form a helix HI-2 region; the sequence is AAALAGYT. The ETS DNA-binding region spans 335 to 415; it reads IQLWQFLLEL…AGKRYVYRFV (81 aa). Residues 418 to 422 form a helix H4 region; it reads LQSLL. Residues 426 to 432 are helix H5; sequence PEELHAM.

The protein belongs to the ETS family. In terms of assembly, binds DNA as a homodimer; homodimerization is required for transcription activation. Interacts with MAF and MAFB. Interacts with PAX5; the interaction alters DNA-binding properties. Interacts with DAXX. Interacts with UBE2I. Interacts with SP100; the interaction is direct and modulates ETS1 transcriptional activity. In terms of processing, sumoylated on Lys-15 and Lys-227, preferentially with SUMO2; which inhibits transcriptional activity. Post-translationally, ubiquitinated; which induces proteasomal degradation. Phosphorylation at Ser-251, Ser-282 and Ser-285 by CaMK2/CaMKII in response to calcium signaling decreases affinity for DNA: an increasing number of phosphoserines causes DNA-binding to become progressively weaker. As to expression, highly expressed within lymphoid cells. Isoforms c-ETS-1A and Ets-1 p27 are both detected in all fetal tissues tested, but vary with tissue type in adult tissues. None is detected in brain or kidney.

The protein resides in the nucleus. It localises to the cytoplasm. Autoinhibited by a module composed of four alpha helices (HI-1, HI-2, H4, and H5) that flank the DNA-binding ETS domain, reducing the affinity for DNA. Phosphorylation by CaMK2/CaMKII in response to calcium signaling decreases affinity for DNA. In terms of biological role, transcription factor. Directly controls the expression of cytokine and chemokine genes in a wide variety of different cellular contexts. May control the differentiation, survival and proliferation of lymphoid cells. May also regulate angiogenesis through regulation of expression of genes controlling endothelial cell migration and invasion. Functionally, acts as a dominant-negative for isoform c-ETS-1A. The protein is Protein C-ets-1 (ETS1) of Homo sapiens (Human).